Consider the following 389-residue polypeptide: MVSVAEIRQAQRAEGPATIMAIGTANPANCVEQSTYPDFYFKITNSEHKVELKEKFQRMCDKSMIKRRYMYLTEEILKDNPRVCEYMAPSLAARQDMAVVVVPRLGKEAAVKAIKEWGQPKSKITHLIFCTTSGVDMPGADYQLTKLLGLRPYVKRYMMYQQGCFAGGTVLRLAKDLAENNKGARVLVVCSEETPVTFRGPSDTHLDSLVGQALFGDGAAALIVGSDPIPEIEKPIFEMVWTAHTIAPDSEGAIDGHLREAGLTFHLLKDVPGIVSKNIDKALIEAFQPLNISDYNSIFWIAHPGGPAILDQVEEKLGLKPEKMKATREVLSEYGNMSSACVLFILDEMRKKSVQAGLKTTGEGLDWGVLFGFGPGLTIETVVLHSVAI.

C164 is an active-site residue.

It belongs to the thiolase-like superfamily. Chalcone/stilbene synthases family.

The catalysed reaction is (E)-4-coumaroyl-CoA + 3 malonyl-CoA + 3 H(+) = 2',4,4',6'-tetrahydroxychalcone + 3 CO2 + 4 CoA. It functions in the pathway secondary metabolite biosynthesis; flavonoid biosynthesis. The primary product of this enzyme is 4,2',4',6'-tetrahydroxychalcone (also termed naringenin-chalcone or chalcone) which can under specific conditions spontaneously isomerize into naringenin. In Medicago sativa (Alfalfa), this protein is Chalcone synthase 1 (CHS1).